The sequence spans 299 residues: tRNA(Met) cytidine acetate ligase (299 aa).

ATP-binding positions include 6-19 (IAEYNPFHNGHIYM), G100, N157, and R182.

Belongs to the TmcAL family.

The protein localises to the cytoplasm. The enzyme catalyses cytidine(34) in elongator tRNA(Met) + acetate + ATP = N(4)-acetylcytidine(34) in elongator tRNA(Met) + AMP + diphosphate. Catalyzes the formation of N(4)-acetylcytidine (ac(4)C) at the wobble position of elongator tRNA(Met), using acetate and ATP as substrates. First activates an acetate ion to form acetyladenylate (Ac-AMP) and then transfers the acetyl group to tRNA to form ac(4)C34. The polypeptide is tRNA(Met) cytidine acetate ligase (Mycoplasma mobile (strain ATCC 43663 / 163K / NCTC 11711) (Mesomycoplasma mobile)).